The chain runs to 62 residues: uncharacterized protein (62 aa).

This is an uncharacterized protein from Solanum tuberosum (Potato).